The sequence spans 255 residues: Small ribosomal subunit protein uS2 (255 aa).

Residues Ala232 to Ala255 are disordered.

Belongs to the universal ribosomal protein uS2 family.

The sequence is that of Small ribosomal subunit protein uS2 from Rhizobium meliloti (strain 1021) (Ensifer meliloti).